The following is a 435-amino-acid chain: BAHD acyltransferase BIA1 (435 aa).

Active-site proton acceptor residues include histidine 151 and aspartate 369.

This sequence belongs to the plant acyltransferase family. Mostly expressed in roots (particularly in the root elongation zone), and, to a lower extent, in seedling, leaves (especially in hydathodes), siliques (e.g. in developing seeds) and flowers.

The protein localises to the cytoplasm. In terms of biological role, monitors brassinosteroids (BR) responses and homeostasis, particularly in the root and hypocotyl in darkness. Promotes flavonoid biosynthesis. The protein is BAHD acyltransferase BIA1 of Arabidopsis thaliana (Mouse-ear cress).